Here is a 385-residue protein sequence, read N- to C-terminus: tRNA N6-adenosine threonylcarbamoyltransferase (385 aa).

3 residues coordinate a divalent metal cation: H140, H144, and Y161. Substrate contacts are provided by residues 161–165 (YVSGG), D193, G208, E212, and N314. D343 provides a ligand contact to a divalent metal cation.

Belongs to the KAE1 / TsaD family. Component of the EKC/KEOPS complex composed of at least BUD32, CGI121, GON7, KAE1 and PCC1; the whole complex dimerizes. A divalent metal cation is required as a cofactor.

It is found in the cytoplasm. Its subcellular location is the nucleus. The enzyme catalyses L-threonylcarbamoyladenylate + adenosine(37) in tRNA = N(6)-L-threonylcarbamoyladenosine(37) in tRNA + AMP + H(+). In terms of biological role, component of the EKC/KEOPS complex that is required for the formation of a threonylcarbamoyl group on adenosine at position 37 (t(6)A37) in tRNAs that read codons beginning with adenine. The complex is probably involved in the transfer of the threonylcarbamoyl moiety of threonylcarbamoyl-AMP (TC-AMP) to the N6 group of A37. KAE1 likely plays a direct catalytic role in this reaction, but requires other protein(s) of the complex to fulfill this activity. The EKC/KEOPS complex also promotes both telomere uncapping and telomere elongation. The complex is required for efficient recruitment of transcriptional coactivators. This is tRNA N6-adenosine threonylcarbamoyltransferase from Eremothecium gossypii (strain ATCC 10895 / CBS 109.51 / FGSC 9923 / NRRL Y-1056) (Yeast).